Here is a 935-residue protein sequence, read N- to C-terminus: Disintegrin and metalloproteinase domain-containing protein 22 (935 aa).

Residues 1–24 (MHINGGPLASWICCVIGSIHLAHA) form the signal peptide. Residues 25 to 227 (STRPENGGTS…QQTRSQRKKR (203 aa)) constitute a propeptide that is removed on maturation. N-linked (GlcNAc...) asparagine glycosylation is found at Asn-167 and Asn-210. The Extracellular portion of the chain corresponds to 228–736 (QTRRYPRNVE…NRDEGVISTN (509 aa)). One can recognise a Peptidase M12B domain in the interval 241–440 (KYVELMIVND…GGGACLFNKP (200 aa)). 17 cysteine pairs are disulfide-bonded: Cys-351/Cys-435, Cys-394/Cys-419, Cys-396/Cys-403, Cys-449/Cys-479, Cys-460/Cys-476, Cys-462/Cys-468, Cys-475/Cys-496, Cys-487/Cys-493, Cys-492/Cys-518, Cys-505/Cys-525, Cys-512/Cys-544, Cys-537/Cys-549, Cys-556/Cys-607, Cys-571/Cys-637, Cys-585/Cys-595, Cys-602/Cys-665, and Cys-659/Cys-670. One can recognise a Disintegrin domain in the interval 446-533 (PPECGNGFVE…QCPANIHKLD (88 aa)). Asn-521 carries N-linked (GlcNAc...) asparagine glycosylation. Residues Asn-609 and Asn-636 are each glycosylated (N-linked (GlcNAc...) asparagine). Residue Asn-677 is glycosylated (N-linked (GlcNAc...) asparagine). The 37-residue stretch at 677 to 713 (NFSTCLGSTNKICSGHGVCSNEVRCICDRFWTGEDCS) folds into the EGF-like domain. 3 cysteine pairs are disulfide-bonded: Cys-681–Cys-695, Cys-689–Cys-701, and Cys-703–Cys-712. The chain crosses the membrane as a helical span at residues 737 to 757 (IIIGAIAGTILVLALVLGITA). Residues 758 to 935 (WGYKNYRRER…QSARLWETSI (178 aa)) are Cytoplasmic-facing. The segment at 850–935 (VSDVCENGRP…QSARLWETSI (86 aa)) is disordered. Over residues 859–870 (PRSNSWQGNVTS) the composition is skewed to polar residues. Residues 871 to 882 (SRKKLRGKRFRP) show a composition bias toward basic residues. The span at 891–906 (SPAKSPSSSTGSIASS) shows a compositional bias: low complexity.

In terms of processing, the precursor is cleaved by a furin endopeptidase. In terms of tissue distribution, low levels in adult tissues. Not detected in developing embryos.

The protein localises to the cell membrane. In terms of biological role, probable ligand for integrin in the brain. This is a non catalytic metalloprotease-like protein. This is Disintegrin and metalloproteinase domain-containing protein 22 (adam22) from Xenopus laevis (African clawed frog).